Consider the following 153-residue polypeptide: Histone H2B.10 (153 aa).

Basic and acidic residues-rich tracts occupy residues 1-28 and 36-53; these read MAPK…EKAL and EKRL…EGKK. The segment at 1–61 is disordered; the sequence is MAPKAEKKPA…KKAGRKKAKK (61 aa). Residues lysine 7 and lysine 37 each carry the N6-acetyllysine modification. Lysine 149 is covalently cross-linked (Glycyl lysine isopeptide (Lys-Gly) (interchain with G-Cter in ubiquitin)).

Belongs to the histone H2B family. As to quaternary structure, the nucleosome is a histone octamer containing two molecules each of H2A, H2B, H3 and H4 assembled in one H3-H4 heterotetramer and two H2A-H2B heterodimers. The octamer wraps approximately 147 bp of DNA. Post-translationally, can be acetylated to form H2BK6ac and H2BK33ac. In terms of processing, monoubiquitinated by BRE1 to form H2BK143ub1 and deubiquitinated by UBP26. Required for heterochromatic histone H3 di- and trimethylation at H3K4me. May give a specific tag for epigenetic transcriptional activation.

The protein resides in the nucleus. The protein localises to the chromosome. Its function is as follows. Core component of nucleosome. Nucleosomes wrap and compact DNA into chromatin, limiting DNA accessibility to the cellular machineries which require DNA as a template. Histones thereby play a central role in transcription regulation, DNA repair, DNA replication and chromosomal stability. DNA accessibility is regulated via a complex set of post-translational modifications of histones, also called histone code, and nucleosome remodeling. This is Histone H2B.10 (H2B.10) from Oryza sativa subsp. japonica (Rice).